Consider the following 107-residue polypeptide: Circadian clock oscillator protein KaiB (107 aa).

Belongs to the KaiB family. May undergo a major conformational rearrangment; in the free state forms homooligomers. When bound to KaiC switches to a monomeric thioredoxin-fold (KaiB(fs)). The active oscillator complex is probably KaiC(6):KaiB(6).

In terms of biological role, component of the KaiBC clock protein complex, which constitutes the main circadian regulator in cyanobacteria; it may modify the ATPase activity of KaiC. Functionally, does not stimulate dephosphorylation of endogenous KaiC, although it does stimulate dephosphorylation of KiaC from S.elongatus strain PCC 7942. Reduces the ATPase activity of KaiC by about half in vitro, which may be its function in vivo. May be a metamorphic protein which reversibly switches between an inactive tetrameric fold and a rare, thioredoxin-like monomeric fold (KaiB(fs)). KaiB(fs) binds phospho-KaiC, and perhaps clock output effectors. This chain is Circadian clock oscillator protein KaiB, found in Prochlorococcus marinus subsp. pastoris (strain CCMP1986 / NIES-2087 / MED4).